The sequence spans 321 residues: Tetraacyldisaccharide 4'-kinase (321 aa).

54–61 is a binding site for ATP; it reads SVGGTGKT.

Belongs to the LpxK family.

The enzyme catalyses a lipid A disaccharide + ATP = a lipid IVA + ADP + H(+). It functions in the pathway glycolipid biosynthesis; lipid IV(A) biosynthesis; lipid IV(A) from (3R)-3-hydroxytetradecanoyl-[acyl-carrier-protein] and UDP-N-acetyl-alpha-D-glucosamine: step 6/6. Functionally, transfers the gamma-phosphate of ATP to the 4'-position of a tetraacyldisaccharide 1-phosphate intermediate (termed DS-1-P) to form tetraacyldisaccharide 1,4'-bis-phosphate (lipid IVA). This is Tetraacyldisaccharide 4'-kinase from Rickettsia africae (strain ESF-5).